Consider the following 271-residue polypeptide: Phosphatidylinositol transfer protein beta isoform (271 aa).

Lys-215 bears the N6-acetyllysine mark. Ser-262 is modified (phosphoserine).

This sequence belongs to the PtdIns transfer protein family. PI transfer class I subfamily. In terms of processing, constitutive phosphorylation of Ser-262 has no effect on phospholipid transfer activity but is required for Golgi targeting.

The protein resides in the golgi apparatus. It localises to the golgi apparatus membrane. It is found in the endoplasmic reticulum membrane. It carries out the reaction a 1,2-diacyl-sn-glycero-3-phosphocholine(in) = a 1,2-diacyl-sn-glycero-3-phosphocholine(out). The catalysed reaction is a 1,2-diacyl-sn-glycero-3-phospho-(1D-myo-inositol)(in) = a 1,2-diacyl-sn-glycero-3-phospho-(1D-myo-inositol)(out). The enzyme catalyses an N-(acyl)-sphingosylphosphocholine(in) = an N-(acyl)-sphingosylphosphocholine(out). Catalyzes the transfer of phosphatidylinositol, phosphatidylcholine and sphingomyelin between membranes. Required for COPI-mediated retrograde transport from the Golgi to the endoplasmic reticulum; phosphatidylinositol and phosphatidylcholine transfer activity is essential for this function. This chain is Phosphatidylinositol transfer protein beta isoform (PITPNB), found in Bos taurus (Bovine).